The chain runs to 357 residues: Tetraacyldisaccharide 4'-kinase (357 aa).

49-56 (TIGGTGKT) lines the ATP pocket.

This sequence belongs to the LpxK family.

It carries out the reaction a lipid A disaccharide + ATP = a lipid IVA + ADP + H(+). It functions in the pathway glycolipid biosynthesis; lipid IV(A) biosynthesis; lipid IV(A) from (3R)-3-hydroxytetradecanoyl-[acyl-carrier-protein] and UDP-N-acetyl-alpha-D-glucosamine: step 6/6. Transfers the gamma-phosphate of ATP to the 4'-position of a tetraacyldisaccharide 1-phosphate intermediate (termed DS-1-P) to form tetraacyldisaccharide 1,4'-bis-phosphate (lipid IVA). This is Tetraacyldisaccharide 4'-kinase from Porphyromonas gingivalis (strain ATCC BAA-308 / W83).